A 159-amino-acid chain; its full sequence is Ribosomal RNA large subunit methyltransferase H (159 aa).

Residues L76, G108, and 127-132 (FGLLTL) contribute to the S-adenosyl-L-methionine site.

It belongs to the RNA methyltransferase RlmH family. Homodimer.

It localises to the cytoplasm. The catalysed reaction is pseudouridine(1915) in 23S rRNA + S-adenosyl-L-methionine = N(3)-methylpseudouridine(1915) in 23S rRNA + S-adenosyl-L-homocysteine + H(+). Functionally, specifically methylates the pseudouridine at position 1915 (m3Psi1915) in 23S rRNA. The protein is Ribosomal RNA large subunit methyltransferase H of Streptococcus pyogenes serotype M6 (strain ATCC BAA-946 / MGAS10394).